Consider the following 220-residue polypeptide: UPF0502 protein VV2_0756 (220 aa).

The protein belongs to the UPF0502 family.

In Vibrio vulnificus (strain CMCP6), this protein is UPF0502 protein VV2_0756.